The chain runs to 259 residues: TCF3 fusion partner homolog (259 aa).

Disordered stretches follow at residues 50–72 and 141–210; these read GGLGDSGLRERDEEEEAARGRRR and EDDG…APVQ. The residue at position 167 (Ser167) is a Phosphoserine. Over residues 167–178 the composition is skewed to polar residues; it reads SPSQRTTATLDP. Thr172 carries the phosphothreonine modification. Residues Ser180 and Ser188 each carry the phosphoserine modification. Thr203 carries the phosphothreonine modification. A Glycyl lysine isopeptide (Lys-Gly) (interchain with G-Cter in SUMO2) cross-link involves residue Lys222. The residue at position 255 (Ser255) is a Phosphoserine.

As to quaternary structure, interacts with NOL3; translocates NOL3 into the nucleus and negatively regulated TFPT-induced cell death. Component of the chromatin remodeling INO80 complex; specifically part of a complex module associated with the N-terminus of INO80.

It is found in the nucleus. Functionally, appears to promote apoptosis in a p53/TP53-independent manner. Putative regulatory component of the chromatin remodeling INO80 complex which is involved in transcriptional regulation, DNA replication and probably DNA repair. This Mus musculus (Mouse) protein is TCF3 fusion partner homolog (Tfpt).